A 308-amino-acid polypeptide reads, in one-letter code: UDP-N-acetylenolpyruvoylglucosamine reductase (308 aa).

Residues 32–196 (VGGPAARLYK…ISAKLQLSPG (165 aa)) enclose the FAD-binding PCMH-type domain. R176 is a catalytic residue. S225 serves as the catalytic Proton donor. E296 is a catalytic residue.

The protein belongs to the MurB family. The cofactor is FAD.

It localises to the cytoplasm. It carries out the reaction UDP-N-acetyl-alpha-D-muramate + NADP(+) = UDP-N-acetyl-3-O-(1-carboxyvinyl)-alpha-D-glucosamine + NADPH + H(+). It participates in cell wall biogenesis; peptidoglycan biosynthesis. In terms of biological role, cell wall formation. The protein is UDP-N-acetylenolpyruvoylglucosamine reductase of Legionella pneumophila subsp. pneumophila (strain Philadelphia 1 / ATCC 33152 / DSM 7513).